The sequence spans 268 residues: Glucosamine-6-phosphate deaminase (268 aa).

Aspartate 72 (proton acceptor; for enolization step) is an active-site residue. The For ring-opening step role is filled by aspartate 141. The active-site Proton acceptor; for ring-opening step is the histidine 143. The For ring-opening step role is filled by glutamate 148.

The protein belongs to the glucosamine/galactosamine-6-phosphate isomerase family. NagB subfamily.

It carries out the reaction alpha-D-glucosamine 6-phosphate + H2O = beta-D-fructose 6-phosphate + NH4(+). It participates in amino-sugar metabolism; N-acetylneuraminate degradation; D-fructose 6-phosphate from N-acetylneuraminate: step 5/5. Its activity is regulated as follows. Allosterically activated by N-acetylglucosamine 6-phosphate (GlcNAc6P). Functionally, catalyzes the reversible isomerization-deamination of glucosamine 6-phosphate (GlcN6P) to form fructose 6-phosphate (Fru6P) and ammonium ion. This chain is Glucosamine-6-phosphate deaminase, found in Borreliella afzelii (strain PKo) (Borrelia afzelii).